We begin with the raw amino-acid sequence, 144 residues long: Hemoglobin subunit alpha-1 (144 aa).

At S1 the chain carries N-acetylserine. The region spanning 1-144 (SLTAKDKSVV…VSAALADKYR (144 aa)) is the Globin domain. H61 lines the O2 pocket. Heme b is bound at residue H90.

Belongs to the globin family. Heterotetramer of two alpha chains and two beta chains. In terms of tissue distribution, red blood cells.

Involved in oxygen transport from gills to the various peripheral tissues. In Oncorhynchus mykiss (Rainbow trout), this protein is Hemoglobin subunit alpha-1 (hba1).